The primary structure comprises 585 residues: Rhizobactin siderophore biosynthesis protein RhbC (585 aa).

It belongs to the IucA/IucC family.

It functions in the pathway siderophore biosynthesis; rhizobactin biosynthesis. The chain is Rhizobactin siderophore biosynthesis protein RhbC (rhbC) from Rhizobium meliloti (strain 1021) (Ensifer meliloti).